The sequence spans 369 residues: Extracellular signal-regulated kinase 2 (369 aa).

Residues 14-304 (YEVLQKIGKG…AEEALAHPFV (291 aa)) enclose the Protein kinase domain. Residues 20–28 (IGKGAYGIV) and Lys-43 each bind ATP. The Proton acceptor role is filled by Asp-137. Position 176 is a phosphothreonine (Thr-176). The TXY signature appears at 176 to 178 (TEY). Tyr-178 is subject to Phosphotyrosine. A disordered region spans residues 346 to 369 (KKKEERKKQTNPTKPDTTAPTLST). Polar residues predominate over residues 355 to 369 (TNPTKPDTTAPTLST).

It belongs to the protein kinase superfamily. CMGC Ser/Thr protein kinase family. MAP kinase subfamily. The cofactor is Mg(2+). In terms of processing, dually phosphorylated on Thr-176 and Tyr-178, which activates the enzyme.

It carries out the reaction L-seryl-[protein] + ATP = O-phospho-L-seryl-[protein] + ADP + H(+). The catalysed reaction is L-threonyl-[protein] + ATP = O-phospho-L-threonyl-[protein] + ADP + H(+). With respect to regulation, activated by tyrosine and threonine phosphorylation. Functionally, implicated in the relay of the cAMP chemotactic signal and cell differentiation. Important for receptor-mediated activation of adenylyl cyclase. This chain is Extracellular signal-regulated kinase 2 (erkB), found in Dictyostelium discoideum (Social amoeba).